The primary structure comprises 275 residues: Small ribosomal subunit protein uS2 (275 aa).

The tract at residues 226 to 275 is disordered; the sequence is AAAPNSASVREEEFSAEAGDEGKGRRAPAKKATEKKADAPAAAPEAPAAE. A compositionally biased stretch (low complexity) spans 264–275; it reads APAAAPEAPAAE.

The protein belongs to the universal ribosomal protein uS2 family.

This is Small ribosomal subunit protein uS2 from Xanthomonas campestris pv. campestris (strain ATCC 33913 / DSM 3586 / NCPPB 528 / LMG 568 / P 25).